Reading from the N-terminus, the 419-residue chain is MSGATLLKESGPKEVFCGLTSIVWLHRRMPDAFFLVVGSRTCAHLIQSAAGVMIFAEPRFGTAILEERDLAGLADAHDELNRVVKNLLARRPEIKTLFLVGSCPSEVIKIDLSRVAENLNIELKGQVTVLNYSGSGIETTFTQGEDGALKALIPLMPKSDQKKLLLVGTLANAVEDRLVSIFNRLGIDNVESFPPRQSTELPSIGPETKVLLTQPYLTDTARELKNKGAEIIEAPFPLGVTGSTLWIQAAANSFGIDKSIVDSILNPLISRAKKALEPHVEKLSGKKLFLLPESQLEIPLARFLSNECGMEIVEIGTPYLNRDLMKAEIDLLPPDCRIVEGQHVEKQLDRVRDSSPDLVVCGMGLANPLEAEGISTKWSIEMVFSPIHGIDQASDLAELFSRPLRRHDILNPTKTLTSN.

3 residues coordinate [4Fe-4S] cluster: cysteine 17, cysteine 42, and cysteine 103.

This sequence belongs to the BchN/ChlN family. As to quaternary structure, protochlorophyllide reductase is composed of three subunits; ChlL, ChlN and ChlB. Forms a heterotetramer of two ChlB and two ChlN subunits. [4Fe-4S] cluster is required as a cofactor.

The enzyme catalyses chlorophyllide a + oxidized 2[4Fe-4S]-[ferredoxin] + 2 ADP + 2 phosphate = protochlorophyllide a + reduced 2[4Fe-4S]-[ferredoxin] + 2 ATP + 2 H2O. Its pathway is porphyrin-containing compound metabolism; chlorophyll biosynthesis (light-independent). In terms of biological role, component of the dark-operative protochlorophyllide reductase (DPOR) that uses Mg-ATP and reduced ferredoxin to reduce ring D of protochlorophyllide (Pchlide) to form chlorophyllide a (Chlide). This reaction is light-independent. The NB-protein (ChlN-ChlB) is the catalytic component of the complex. This chain is Light-independent protochlorophyllide reductase subunit N, found in Prochlorococcus marinus (strain NATL1A).